The sequence spans 435 residues: Putative acid phosphatase F26C11.1 (435 aa).

H38 functions as the Nucleophile in the catalytic mechanism. Catalysis depends on D317, which acts as the Proton donor. C382 and C388 form a disulfide bridge.

This sequence belongs to the histidine acid phosphatase family.

The enzyme catalyses a phosphate monoester + H2O = an alcohol + phosphate. In Caenorhabditis elegans, this protein is Putative acid phosphatase F26C11.1.